The sequence spans 506 residues: Glucan endo-1,3-beta-glucosidase 13 (506 aa).

A signal peptide spans 1-22; it reads MARDFKLIFSISILLLLLDCCY. N70 carries N-linked (GlcNAc...) asparagine glycosylation. E119 serves as the catalytic Proton donor. Residues N127, N175, and N212 are each glycosylated (N-linked (GlcNAc...) asparagine). E264 (nucleophile) is an active-site residue. N-linked (GlcNAc...) asparagine glycans are attached at residues N356 and N361. An intrachain disulfide couples C370 to C433. N-linked (GlcNAc...) asparagine glycans are attached at residues N459 and N465. A lipid anchor (GPI-anchor amidated serine) is attached at S471. The propeptide at 472–506 is removed in mature form; it reads SASTPRGNELLQWILKLCLMISLFFSLQTMNSQAL.

This sequence belongs to the glycosyl hydrolase 17 family. Contains two additional disulfide bonds.

Its subcellular location is the secreted. The protein localises to the cell wall. The protein resides in the cell membrane. It carries out the reaction Hydrolysis of (1-&gt;3)-beta-D-glucosidic linkages in (1-&gt;3)-beta-D-glucans.. In Arabidopsis thaliana (Mouse-ear cress), this protein is Glucan endo-1,3-beta-glucosidase 13.